The sequence spans 340 residues: GTPase Obg (340 aa).

The 161-residue stretch at 1 to 161 (MKFVDMTNIT…QHLLLELLLI (161 aa)) folds into the Obg domain. In terms of domain architecture, OBG-type G spans 162-335 (ANVGIFGLPN…LCNSIMKFIM (174 aa)). GTP is bound by residues 168–175 (GLPNSGKS), 193–197 (FTTLV), 215–218 (DIPG), 285–288 (NKID), and 316–318 (SSI). 2 residues coordinate Mg(2+): Ser175 and Thr195.

This sequence belongs to the TRAFAC class OBG-HflX-like GTPase superfamily. OBG GTPase family. As to quaternary structure, monomer. It depends on Mg(2+) as a cofactor.

The protein localises to the cytoplasm. Functionally, an essential GTPase which binds GTP, GDP and possibly (p)ppGpp with moderate affinity, with high nucleotide exchange rates and a fairly low GTP hydrolysis rate. Plays a role in control of the cell cycle, stress response, ribosome biogenesis and in those bacteria that undergo differentiation, in morphogenesis control. The polypeptide is GTPase Obg (Blochmanniella pennsylvanica (strain BPEN)).